We begin with the raw amino-acid sequence, 524 residues long: Solute carrier family 35 member F5 (524 aa).

A disordered region spans residues 1-22 (MVPPRHHPGAGRPGALSSSPPF). Residues 13–22 (PGALSSSPPF) show a composition bias toward low complexity. 2 helical membrane-spanning segments follow: residues 69–89 (MALG…SSEL) and 101–121 (FFST…FIVW). Ser207 is modified (phosphoserine). 8 consecutive transmembrane segments (helical) span residues 244-264 (ISFF…EALS), 269-289 (AIVN…AAMF), 297-317 (FTLS…LVNL), 328-348 (TIGS…IVMI), 362-382 (MFFG…FFLL), 396-416 (VVLM…EFLW), 421-441 (FLTS…LSII), and 453-473 (WLFF…TLLC). An EamA domain is found at 253–317 (FLANFSYQEA…SIGGVVLVNL (65 aa)).

Belongs to the SLC35F solute transporter family.

The protein resides in the membrane. Functionally, putative solute transporter. The polypeptide is Solute carrier family 35 member F5 (SLC35F5) (Bos taurus (Bovine)).